We begin with the raw amino-acid sequence, 385 residues long: Deoxyguanosinetriphosphate triphosphohydrolase-like protein (385 aa).

Positions 1–14 are enriched in basic and acidic residues; the sequence is MTEGVEGRSQERSD. The segment at 1-23 is disordered; sequence MTEGVEGRSQERSDLAGFAARSA. Residues 75–204 form the HD domain; that stretch reads RLTHSLEVAQ…INYADEIAYN (130 aa).

It belongs to the dGTPase family. Type 2 subfamily.

This Geobacter metallireducens (strain ATCC 53774 / DSM 7210 / GS-15) protein is Deoxyguanosinetriphosphate triphosphohydrolase-like protein.